A 712-amino-acid polypeptide reads, in one-letter code: Glucans biosynthesis glucosyltransferase H (712 aa).

Transmembrane regions (helical) follow at residues 57 to 77 (LAIMLATAALTCAGGYEMYQV), 89 to 109 (IVLALFAALFAWVALSFVSAL), 408 to 428 (GIGSYITAPMWLAFLVAGILI), 462 to 482 (FAGTMGLLMMPKLLALILVVI), 552 to 572 (YAAPSWLGAVMAVSALLVSWP), and 573 to 593 (LLLWMMPVILGLVLAIPVALL).

This sequence belongs to the glycosyltransferase 2 family. OpgH subfamily.

The protein resides in the cell inner membrane. The protein operates within glycan metabolism; osmoregulated periplasmic glucan (OPG) biosynthesis. Functionally, involved in the biosynthesis of osmoregulated periplasmic glucans (OPGs). This chain is Glucans biosynthesis glucosyltransferase H, found in Rhodopseudomonas palustris (strain BisA53).